We begin with the raw amino-acid sequence, 292 residues long: MSLFDWFADRRKGQYVGKVNQEPDEGDGLWSKCPECGQVVYRKDLLSNASVCGNCGYHHRIDSTERIAVLVDPNSFVPMDQELQPTDPLGFKDRRAYADRLRETQASTGLRDGVITGLCEVEGIPMALAVMDFRFMGGSMGSVVGEKITRLVEVATAKKLPLLIVCASGGARMQEGMLSLMQMAKISGALERHREAGVLYMPLLTHPTTGGVTASFAMLGDLILAEPKALIGFAGRRVIEQTLREKLPDNFQTAEYLQEHGFVDSIVPRTQLRSTLASLLRLHGCESRVASS.

The 264-residue stretch at L29–S292 folds into the CoA carboxyltransferase N-terminal domain. C33, C36, C52, and C55 together coordinate Zn(2+). The segment at C33–C55 adopts a C4-type zinc-finger fold.

It belongs to the AccD/PCCB family. Acetyl-CoA carboxylase is a heterohexamer composed of biotin carboxyl carrier protein (AccB), biotin carboxylase (AccC) and two subunits each of ACCase subunit alpha (AccA) and ACCase subunit beta (AccD). It depends on Zn(2+) as a cofactor.

Its subcellular location is the cytoplasm. It carries out the reaction N(6)-carboxybiotinyl-L-lysyl-[protein] + acetyl-CoA = N(6)-biotinyl-L-lysyl-[protein] + malonyl-CoA. It functions in the pathway lipid metabolism; malonyl-CoA biosynthesis; malonyl-CoA from acetyl-CoA: step 1/1. Functionally, component of the acetyl coenzyme A carboxylase (ACC) complex. Biotin carboxylase (BC) catalyzes the carboxylation of biotin on its carrier protein (BCCP) and then the CO(2) group is transferred by the transcarboxylase to acetyl-CoA to form malonyl-CoA. This chain is Acetyl-coenzyme A carboxylase carboxyl transferase subunit beta, found in Synechococcus sp. (strain CC9311).